A 72-amino-acid polypeptide reads, in one-letter code: Protein RALF-like 36 (72 aa).

The signal sequence occupies residues 1–27 (MGISKKTVVQSFALIIIISIVMSTTEA). Cystine bridges form between cysteine 43-cysteine 51 and cysteine 63-cysteine 69.

It belongs to the plant rapid alkalinization factor (RALF) family.

The protein resides in the secreted. Functionally, cell signaling peptide that may regulate plant stress, growth, and development. Mediates a rapid alkalinization of extracellular space by mediating a transient increase in the cytoplasmic Ca(2+) concentration leading to a calcium-dependent signaling events through a cell surface receptor and a concomitant activation of some intracellular mitogen-activated protein kinases. The polypeptide is Protein RALF-like 36 (Arabidopsis thaliana (Mouse-ear cress)).